The primary structure comprises 220 residues: Splicing factor U2AF 26 kDa subunit (220 aa).

Ala2 is modified (N-acetylalanine). The segment at 12–40 (EKDKVNCSFYFKIGVCRHGDRCSRLHNKP) adopts a C3H1-type 1 zinc-finger fold. In terms of domain architecture, RRM spans 65 to 147 (SHCHVSDVEV…QAVHGELSPV (83 aa)). The C3H1-type 2 zinc-finger motif lies at 149–176 (DFRESCCRQYEMGECTRGGFCNFMHLRP). The segment at 185 to 220 (LYGRGPRRRSPPRFHTGHHPRERNHRCSPDHWHGRF) is disordered. Residues 189–208 (GPRRRSPPRFHTGHHPRERN) are compositionally biased toward basic residues. Basic and acidic residues predominate over residues 209–220 (HRCSPDHWHGRF).

Belongs to the splicing factor SR family. Interacts with GFI1, U2AF2 and C1QBP. Isoform 2 is widely expressed. Isoform 3 is highly expressed in heart, brain and lung, lower expressed in thymus and much lower expressed in peripheral blood leukocytes.

The protein resides in the nucleus. The protein localises to the nucleus speckle. Its subcellular location is the cytoplasm. Its function is as follows. RNA-binding protein that function as a pre-mRNA splicing factor. Plays a critical role in both constitutive and enhancer-dependent splicing by mediating protein-protein interactions and protein-RNA interactions required for accurate 3'-splice site selection. Acts by enhancing the binding of U2AF2 to weak pyrimidine tracts. Also participates in the regulation of alternative pre-mRNA splicing. Activates exon 5 skipping of PTPRC during T-cell activation; an event reversed by GFI1. Binds to RNA at the AG dinucleotide at the 3'-splice site. Shows a preference for AGC or AGA. The protein is Splicing factor U2AF 26 kDa subunit (U2AF1L4) of Homo sapiens (Human).